The following is a 1464-amino-acid chain: Secretory phospholipase A2 receptor (1464 aa).

Positions 1 to 22 are cleaved as a signal peptide; the sequence is MLLSPSLLLPLLLLLGAPRGCA. Topologically, residues 23-1398 are extracellular; the sequence is EGVAAALTPE…ELPEKGPSHS (1376 aa). A Ricin B-type lectin domain is found at 40–163; it reads KGIFVIQSES…GSGGGDICEY (124 aa). Cystine bridges form between Cys-53/Cys-66, Cys-91/Cys-108, Cys-180/Cys-206, Cys-194/Cys-221, Cys-262/Cys-356, Cys-332/Cys-348, Cys-408/Cys-503, Cys-480/Cys-495, Cys-619/Cys-636, Cys-701/Cys-798, Cys-776/Cys-790, Cys-842/Cys-939, Cys-916/Cys-931, Cys-1069/Cys-1089, Cys-1211/Cys-1225, Cys-1282/Cys-1378, and Cys-1356/Cys-1370. N-linked (GlcNAc...) asparagine glycosylation occurs at Asn-95. The Fibronectin type-II domain occupies 175 to 223; the sequence is AHGMPCMFPFQYNHQWHHECTREGREDDLLWCATTSRYERDEKWGFCPD. 8 consecutive C-type lectin domains span residues 240–357, 387–504, 524–645, 675–799, 821–940, 967–1098, 1123–1234, and 1259–1379; these read NSHI…YVCK, YNRN…YVCK, HGGF…MSLC, GLAS…WICK, YQDA…SICK, FNYK…GFVC, YGNR…GAIC, and FKSN…FICK. Residue Asn-456 is glycosylated (N-linked (GlcNAc...) asparagine). A helical transmembrane segment spans residues 1399–1419; sequence IIPLAVVLTLIVIVAICTLSF. The Cytoplasmic segment spans residues 1420-1464; it reads CIYKHNGGFFRRLAGFRNPYYPATNFSTVHLEENILISDLEKSDQ. Residues 1437–1443 carry the Endocytosis signal motif; that stretch reads NPYYPAT.

As to quaternary structure, interacts with sPLA2-IB/PLA2G1B; this interaction mediates intracellular signaling as well as clearance of extracellular sPLA2-IB/PLA2G1B via endocytotic pathway. Interacts with sPLA2-X/PLA2G10; this interaction mediates sPLA2-X/PLA2G10 clearance and inactivation. Post-translationally, the secretory phospholipase A2 receptor form may be produced by the action of metalloproteinases. It contains all extracellular domains and only lacks transmembrane and cytosolic regions. It is however unclear whether this form is produced by proteolytic cleavage as suggested by some experiments, or by alternative splicing.

Its subcellular location is the cell membrane. It is found in the secreted. Its function is as follows. Receptor for secretory phospholipase A2 (sPLA2). Also able to bind to snake PA2-like toxins. Although its precise function remains unclear, binding of sPLA2 to its receptor participates in both positive and negative regulation of sPLA2 functions as well as clearance of sPLA2. Binding of sPLA2-IB/PLA2G1B induces various effects depending on the cell type, such as activation of the mitogen-activated protein kinase (MAPK) cascade to induce cell proliferation, the production of lipid mediators, selective release of arachidonic acid in bone marrow-derived mast cells. In neutrophils, binding of sPLA2-IB/PLA2G1B can activate p38 MAPK to stimulate elastase release and cell adhesion. May be involved in responses in pro-inflammatory cytokine productions during endotoxic shock. Also has endocytic properties and rapidly internalizes sPLA2 ligands, which is particularly important for the clearance of extracellular sPLA2s to protect their potent enzymatic activities. The soluble secretory phospholipase A2 receptor form is circulating and acts as a negative regulator of sPLA2 functions by blocking the biological functions of sPLA2-IB/PLA2G1B and sPLA2-X/PLA2G10. The sequence is that of Secretory phospholipase A2 receptor (PLA2R1) from Pongo abelii (Sumatran orangutan).